The sequence spans 894 residues: Transcriptional activator/repressor GIS1 (894 aa).

A JmjN domain is found at 12-53 (VPVFKPSMMEFANFQYFIDEITKFGIENGIVKVIPPKEWLEL). Phosphoserine is present on Ser-70. The stretch at 90 to 110 (ENEYDNKSYNLTQWKNLAESL) forms a coiled coil. A JmjC domain is found at 170 to 324 (PYDLTLWNLN…VRKQPLKCGC (155 aa)). Positions 316–332 (RKQPLKCGCGNKKEERK) match the Bipartite nuclear localization signal motif. Residues 324–355 (CGNKKEERKSGPFSNLSYDSNESEQRGSITDN) form a disordered region. Positions 335-354 (PFSNLSYDSNESEQRGSITD) are enriched in polar residues. Phosphoserine is present on Ser-343. Residues 361–385 (QKVRSFDELLNHSSQELQNLEDNKN) adopt a coiled-coil conformation. The span at 521–554 (NISSTNNSANNSSSNNNVSTVPSSMMHSSTLNGT) shows a compositional bias: low complexity. The disordered stretch occupies residues 521-558 (NISSTNNSANNSSSNNNVSTVPSSMMHSSTLNGTSGLG). Phosphoserine is present on residues Ser-690, Ser-694, Ser-696, Ser-734, and Ser-747. The span at 756–768 (LNGNDNSNLDSNN) shows a compositional bias: low complexity. Positions 756–810 (LNGNDNSNLDSNNFDYSFTGNKQESNPSILNNNTNNNDNYRTSSMNNNGNNYQAH) are disordered. Polar residues-rich tracts occupy residues 769–785 (FDYSFTGNKQESNPSIL) and 795–810 (YRTSSMNNNGNNYQAH). The C2H2-type 1 zinc-finger motif lies at 828–851 (YICRECNRQFSSGHHLTRHKKSVH). A C2H2-type 2; atypical zinc finger spans residues 857–882 (HSCPRCGKRFKRRDHVLQHLNKKIPC).

It is found in the nucleus. Functionally, transcription factor involved in the regulation of gene expression upon nutrient starvation. Recognizes and binds to the post-diauxic-shift element 5'-T[AT]AGGGAT-3' in the promoter region. Can act as a transcriptional activator (e.g. of stress genes like SSA3, HSP12 and HSP26) as well as a repressor (e.g. of pyrophosphate phosphatase DPP1). GIS1 also acts as a DNA damage-responsive transcriptional repressor of photolyase PHR1. This is Transcriptional activator/repressor GIS1 (GIS1) from Saccharomyces cerevisiae (strain ATCC 204508 / S288c) (Baker's yeast).